Consider the following 301-residue polypeptide: Putative two-component membrane permease complex subunit SMU_747c (301 aa).

8 helical membrane passes run 15–35 (LAIFLSIIIEALPFILLGAIL), 60–80 (ILFGTFVGFIFPSCECGIVPI), 97–117 (FLATAPIINPIVLFATFSAFG), 124–144 (FLRLFGAIIVAISLGILLGFI), 188–208 (YLIFGSFVAASMQIYVPTRIL), 211–231 (IGHNPLTAILIMMLLAFILSL), 238–258 (FIGTSLLATFGVAPVVAFLLI), and 278–298 (FILQFVGTSSLIIIIYCLIVG).

The protein belongs to the UPF0718 family. In terms of assembly, interacts with SMU_746c.

The protein localises to the cell membrane. Functionally, could be part of a two-component membrane permease system responsible for amino acid transport under low pH. Involved in acidogenesis, biofilm formation and low-pH survival. The polypeptide is Putative two-component membrane permease complex subunit SMU_747c (Streptococcus mutans serotype c (strain ATCC 700610 / UA159)).